The chain runs to 440 residues: MFLAQEIIRKKRDGQPLSEAEIRFFINGIRDNVVSEGQIAALAMTIYFHDMTMPERVALTMAMRDSGTVLDWKSLSLNGPLVDKHSTGGVGDVTSLMLGPMVAACGGYVPMISGRGLGHTGGTLDKLEAIPGFNIFPDDNAFRKIIQDVGVAIIGQTSSLAPADKRFYATRDITATVDSIPLITASILAKKLAEGLDALVMDVKVGSGAFMPTYALSADLAQAIVGVANGAGCKTTALLTDMNQVLASSAGNAVEVREAVRFLTGEYRNPRLLEVTMALCVEMLLSGGLAKDDADARAKLQAVLDNGKAAEVFGRMVAAQQGPTDFVERYDSYLPAATLSKPVYAEKQGIISAMDTRALGMAVVSLGGGRRRATDNIDYSVGLTGMARLGDKVDTQQPLAVIHANDEESWQQAAEEVRSAMVLSDKAPEVTPVVYKRITE.

Belongs to the thymidine/pyrimidine-nucleoside phosphorylase family. As to quaternary structure, homodimer.

It catalyses the reaction thymidine + phosphate = 2-deoxy-alpha-D-ribose 1-phosphate + thymine. It functions in the pathway pyrimidine metabolism; dTMP biosynthesis via salvage pathway; dTMP from thymine: step 1/2. Functionally, the enzymes which catalyze the reversible phosphorolysis of pyrimidine nucleosides are involved in the degradation of these compounds and in their utilization as carbon and energy sources, or in the rescue of pyrimidine bases for nucleotide synthesis. The polypeptide is Thymidine phosphorylase (Serratia proteamaculans (strain 568)).